Here is a 286-residue protein sequence, read N- to C-terminus: ATP synthase gamma chain (286 aa).

It belongs to the ATPase gamma chain family. In terms of assembly, F-type ATPases have 2 components, CF(1) - the catalytic core - and CF(0) - the membrane proton channel. CF(1) has five subunits: alpha(3), beta(3), gamma(1), delta(1), epsilon(1). CF(0) has three main subunits: a, b and c.

It is found in the cell inner membrane. Produces ATP from ADP in the presence of a proton gradient across the membrane. The gamma chain is believed to be important in regulating ATPase activity and the flow of protons through the CF(0) complex. The polypeptide is ATP synthase gamma chain (Pseudomonas syringae pv. tomato (strain ATCC BAA-871 / DC3000)).